Here is a 217-residue protein sequence, read N- to C-terminus: CASP-like protein UU4 (217 aa).

Residues methionine 1–glutamate 11 show a composition bias toward basic and acidic residues. The interval methionine 1–asparagine 21 is disordered. Over methionine 1–glycine 61 the chain is Cytoplasmic. The helical transmembrane segment at leucine 62 to alanine 82 threads the bilayer. Residues serine 83–serine 98 lie on the Extracellular side of the membrane. Residues phenylalanine 99–valine 119 traverse the membrane as a helical segment. Residues methionine 120–glutamine 141 lie on the Cytoplasmic side of the membrane. The helical transmembrane segment at leucine 142–asparagine 162 threads the bilayer. The Extracellular segment spans residues arginine 163 to glutamate 187. A helical transmembrane segment spans residues alanine 188–valine 208. Residues tyrosine 209–leucine 217 are Cytoplasmic-facing.

Belongs to the Casparian strip membrane proteins (CASP) family. As to quaternary structure, homodimer and heterodimers.

It localises to the cell membrane. This is CASP-like protein UU4 from Physcomitrium patens (Spreading-leaved earth moss).